The following is a 920-amino-acid chain: Isoleucine--tRNA ligase (920 aa).

The 'HIGH' region motif lies at 58–68 (PYANGHLHLGH). Position 569 (glutamate 569) interacts with L-isoleucyl-5'-AMP. Positions 610-614 (KMSKS) match the 'KMSKS' region motif. Position 613 (lysine 613) interacts with ATP. Zn(2+)-binding residues include cysteine 895, cysteine 898, cysteine 910, and cysteine 913.

This sequence belongs to the class-I aminoacyl-tRNA synthetase family. IleS type 1 subfamily. As to quaternary structure, monomer. Zn(2+) is required as a cofactor.

Its subcellular location is the cytoplasm. It catalyses the reaction tRNA(Ile) + L-isoleucine + ATP = L-isoleucyl-tRNA(Ile) + AMP + diphosphate. In terms of biological role, catalyzes the attachment of isoleucine to tRNA(Ile). As IleRS can inadvertently accommodate and process structurally similar amino acids such as valine, to avoid such errors it has two additional distinct tRNA(Ile)-dependent editing activities. One activity is designated as 'pretransfer' editing and involves the hydrolysis of activated Val-AMP. The other activity is designated 'posttransfer' editing and involves deacylation of mischarged Val-tRNA(Ile). This is Isoleucine--tRNA ligase from Helicobacter pylori (strain J99 / ATCC 700824) (Campylobacter pylori J99).